The following is a 124-amino-acid chain: Large ribosomal subunit protein bL12 (124 aa).

Belongs to the bacterial ribosomal protein bL12 family. As to quaternary structure, homodimer. Part of the ribosomal stalk of the 50S ribosomal subunit. Forms a multimeric L10(L12)X complex, where L10 forms an elongated spine to which 2 to 4 L12 dimers bind in a sequential fashion. Binds GTP-bound translation factors.

Functionally, forms part of the ribosomal stalk which helps the ribosome interact with GTP-bound translation factors. Is thus essential for accurate translation. The polypeptide is Large ribosomal subunit protein bL12 (Burkholderia lata (strain ATCC 17760 / DSM 23089 / LMG 22485 / NCIMB 9086 / R18194 / 383)).